An 827-amino-acid chain; its full sequence is Putative potassium transporter 12 (827 aa).

A disordered region spans residues Met1–Val31. Topologically, residues Met1–Asp82 are cytoplasmic. A helical membrane pass occupies residues Leu83–Met103. The Extracellular segment spans residues Gly104–Ala129. Residues Leu130–Leu150 traverse the membrane as a helical segment. Over Lys151–Thr216 the chain is Cytoplasmic. A helical transmembrane segment spans residues Leu217–Pro237. Over Ala238 to Lys253 the chain is Extracellular. A helical transmembrane segment spans residues Gly254 to Ile274. The Cytoplasmic segment spans residues Gln275 to Lys281. The helical transmembrane segment at Val282–Ile302 threads the bilayer. Residues Tyr303–Ala335 lie on the Extracellular side of the membrane. Residues Leu336–Phe356 form a helical membrane-spanning segment. At Ser357–Met363 the chain is on the cytoplasmic side. Residues Ala364 to Leu384 traverse the membrane as a helical segment. The Extracellular segment spans residues Thr385 to Ser402. A helical membrane pass occupies residues Leu403–Ile423. Over Ser424–Gln454 the chain is Cytoplasmic. The chain crosses the membrane as a helical span at residues Ile455–Phe475. Residues Arg476 to His480 lie on the Extracellular side of the membrane. Helical transmembrane passes span Ile481 to Thr501 and Leu502 to Phe522. Over Gly523–Lys536 the chain is Extracellular. The chain crosses the membrane as a helical span at residues Ile537–Ile557. At Trp558 to Val827 the chain is on the cytoplasmic side. Residues Arg728 to Glu750 form a disordered region. A compositionally biased stretch (low complexity) spans Glu738–Ser748.

Belongs to the HAK/KUP transporter (TC 2.A.72.3) family.

The protein resides in the cell membrane. Functionally, putative potassium transporter. The sequence is that of Putative potassium transporter 12 (POT12) from Arabidopsis thaliana (Mouse-ear cress).